Consider the following 201-residue polypeptide: Histidine biosynthesis bifunctional protein HisIE (201 aa).

A phosphoribosyl-AMP cyclohydrolase region spans residues 1–111 (MKINWQKVDN…EKTTQPDWIF (111 aa)). Residues 112 to 201 (LSKLERLIAS…IHKLKERHTK (90 aa)) form a phosphoribosyl-ATP pyrophosphohydrolase region.

The protein in the N-terminal section; belongs to the PRA-CH family. This sequence in the C-terminal section; belongs to the PRA-PH family.

The protein localises to the cytoplasm. It carries out the reaction 1-(5-phospho-beta-D-ribosyl)-ATP + H2O = 1-(5-phospho-beta-D-ribosyl)-5'-AMP + diphosphate + H(+). The catalysed reaction is 1-(5-phospho-beta-D-ribosyl)-5'-AMP + H2O = 1-(5-phospho-beta-D-ribosyl)-5-[(5-phospho-beta-D-ribosylamino)methylideneamino]imidazole-4-carboxamide. It functions in the pathway amino-acid biosynthesis; L-histidine biosynthesis; L-histidine from 5-phospho-alpha-D-ribose 1-diphosphate: step 2/9. Its pathway is amino-acid biosynthesis; L-histidine biosynthesis; L-histidine from 5-phospho-alpha-D-ribose 1-diphosphate: step 3/9. The protein is Histidine biosynthesis bifunctional protein HisIE (hisI) of Pasteurella multocida (strain Pm70).